Consider the following 157-residue polypeptide: uncharacterized protein (157 aa).

The N-acetyltransferase domain maps to 9–146; it reads LLINYKTLDE…GDFYVWHPET (138 aa).

This is an uncharacterized protein from Bacillus cereus (strain AH187).